A 504-amino-acid chain; its full sequence is Probable cytosol aminopeptidase (504 aa).

Positions 274 and 279 each coordinate Mn(2+). Lys286 is a catalytic residue. Positions 297, 356, and 358 each coordinate Mn(2+). The active site involves Arg360.

It belongs to the peptidase M17 family. The cofactor is Mn(2+).

The protein localises to the cytoplasm. It carries out the reaction Release of an N-terminal amino acid, Xaa-|-Yaa-, in which Xaa is preferably Leu, but may be other amino acids including Pro although not Arg or Lys, and Yaa may be Pro. Amino acid amides and methyl esters are also readily hydrolyzed, but rates on arylamides are exceedingly low.. It catalyses the reaction Release of an N-terminal amino acid, preferentially leucine, but not glutamic or aspartic acids.. Its function is as follows. Presumably involved in the processing and regular turnover of intracellular proteins. Catalyzes the removal of unsubstituted N-terminal amino acids from various peptides. This is Probable cytosol aminopeptidase from Blochmanniella floridana.